We begin with the raw amino-acid sequence, 207 residues long: Holliday junction branch migration complex subunit RuvA (207 aa).

The tract at residues 1–68 (MIGYLQGSLA…EDQWLLFGFL (68 aa)) is domain I. The domain II stretch occupies residues 69-147 (QMAERDLFRQ…EWREEAGLLP (79 aa)). Residues 148–158 (SATAAPIAAVQ) form a flexible linker region. The tract at residues 158 to 207 (QEDVEMTLLALGYNNREILQALTAIAQENLVQSGQPAEDWIREAIAWLSR) is domain III.

It belongs to the RuvA family. In terms of assembly, homotetramer. Forms an RuvA(8)-RuvB(12)-Holliday junction (HJ) complex. HJ DNA is sandwiched between 2 RuvA tetramers; dsDNA enters through RuvA and exits via RuvB. An RuvB hexamer assembles on each DNA strand where it exits the tetramer. Each RuvB hexamer is contacted by two RuvA subunits (via domain III) on 2 adjacent RuvB subunits; this complex drives branch migration. In the full resolvosome a probable DNA-RuvA(4)-RuvB(12)-RuvC(2) complex forms which resolves the HJ.

The protein resides in the cytoplasm. The RuvA-RuvB-RuvC complex processes Holliday junction (HJ) DNA during genetic recombination and DNA repair, while the RuvA-RuvB complex plays an important role in the rescue of blocked DNA replication forks via replication fork reversal (RFR). RuvA specifically binds to HJ cruciform DNA, conferring on it an open structure. The RuvB hexamer acts as an ATP-dependent pump, pulling dsDNA into and through the RuvAB complex. HJ branch migration allows RuvC to scan DNA until it finds its consensus sequence, where it cleaves and resolves the cruciform DNA. This chain is Holliday junction branch migration complex subunit RuvA, found in Synechococcus elongatus (strain ATCC 33912 / PCC 7942 / FACHB-805) (Anacystis nidulans R2).